The primary structure comprises 202 residues: Hydrogenase expression/formation protein HupD (202 aa).

Residues Glu28, Asp74, and His105 each contribute to the Ni(2+) site.

Belongs to the peptidase A31 family.

Functionally, not known. Could be involved in the processing of hydrogenase. This is Hydrogenase expression/formation protein HupD (hupD) from Rhizobium leguminosarum bv. viciae.